The primary structure comprises 932 residues: MKQLPAATVRLLSSSQIITSVVSVVKELIENSLDAGATSVDVKLENYGFDKIEVRDNGEGIKAVDAPVMAMKYYTSKINSHEDLENLTTYGFRGEALGSICCIAEVLITTRTAADNFSTQYVLDGSGHILSQKPSHLGQGTTVTALRLFKNLPVRKQFYSTAKKCKDEIKKIQDLLMSFGILKPDLRIVFVHNKAVIWQKSRVSDHKMALMSVLGTAVMNNMESFQYHSEESQIYLSGFLPKCDADHSFTSLSTPERSFIFINSRPVHQKDILKLIRHHYNLKCLKESTRLYPVFFLKIDVPTADVDVNLTPDKSQVLLQNKESVLIALENLMTTCYGPLPSTNSYENNKTDVSAADIVLSKTAETDVLFNKVESSGKNYSNVDTSVIPFQNDMHNDESGKNTDDCLNHQISIGDFGYGHCSSEISNIDKNTKNAFQDISMSNVSWENSQTEYSKTCFISSVKHTQSENGNKDHIDESGENEEEAGLENSSEISADEWSRGNILKNSVGENIEPVKILVPEKSLPCKVSNNNYPIPEQMNLNEDSCNKKSNVIDNKSGKVTAYDLLSNRVIKKPMSASALFVQDHRPQFLIENPKTSLEDATLQIEELWKTLSEEEKLKYEEKATKDLERYNSQMKRAIEQESQMSLKDGRKKIKPTSAWNLAQKHKLKTSLSNQPKLDELLQSQIEKRRSQNIKMVQIPFSMKNLKINFKKQNKVDLEEKDEPCLIHNLRFPDAWLMTSKTEVMLLNPYRVEEALLFKRLLENHKLPAEPLEKPIMLTESLFNGSHYLDVLYKMTADDQRYSGSTYLSDPRLTANGFKIKLIPGVSITENYLEIEGMANCLPFYGVADLKEILNAILNRNAKEVYECRPRKVISYLEGEAVRLSRQLPMYLSKEDIQDIIYRMKHQFGNEIKECVHGRPFFHHLTYLPETT.

The disordered stretch occupies residues 465–493; that stretch reads TQSENGNKDHIDESGENEEEAGLENSSEI. Positions 571 to 639 form a DNA-binding region, HMG box; it reads IKKPMSASAL…RYNSQMKRAI (69 aa).

Belongs to the DNA mismatch repair MutL/HexB family. Component of the DNA mismatch repair (MMR) complex composed at least of MSH2, MSH3, MSH6, PMS1 and MLH1. The MutL-beta complex is a heterodimer of PMS1 and MLH1. Interacts with MCM9.

The protein localises to the nucleus. Probably involved in the repair of mismatches in DNA. The polypeptide is PMS1 protein homolog 1 (PMS1) (Homo sapiens (Human)).